The primary structure comprises 365 residues: DNA replication and repair protein RecF (365 aa).

23-30 is a binding site for ATP; the sequence is GPNGIGKS.

The protein belongs to the RecF family.

The protein resides in the cytoplasm. Functionally, the RecF protein is involved in DNA metabolism; it is required for DNA replication and normal SOS inducibility. RecF binds preferentially to single-stranded, linear DNA. It also seems to bind ATP. This Parasynechococcus marenigrum (strain WH8102) protein is DNA replication and repair protein RecF.